The following is a 249-amino-acid chain: 2,3-bisphosphoglycerate-dependent phosphoglycerate mutase (249 aa).

Residues 8–15 (RHGESTWN), 21–22 (TG), Arg60, 87–90 (ERHY), Lys98, 114–115 (RR), and 183–184 (GN) each bind substrate. The active-site Tele-phosphohistidine intermediate is His9. The active-site Proton donor/acceptor is the Glu87.

Belongs to the phosphoglycerate mutase family. BPG-dependent PGAM subfamily.

The catalysed reaction is (2R)-2-phosphoglycerate = (2R)-3-phosphoglycerate. The protein operates within carbohydrate degradation; glycolysis; pyruvate from D-glyceraldehyde 3-phosphate: step 3/5. Catalyzes the interconversion of 2-phosphoglycerate and 3-phosphoglycerate. The polypeptide is 2,3-bisphosphoglycerate-dependent phosphoglycerate mutase (Methanoregula boonei (strain DSM 21154 / JCM 14090 / 6A8)).